A 138-amino-acid chain; its full sequence is ATP synthase epsilon chain (138 aa).

Belongs to the ATPase epsilon chain family. In terms of assembly, F-type ATPases have 2 components, CF(1) - the catalytic core - and CF(0) - the membrane proton channel. CF(1) has five subunits: alpha(3), beta(3), gamma(1), delta(1), epsilon(1). CF(0) has three main subunits: a, b and c.

It localises to the cell membrane. In terms of biological role, produces ATP from ADP in the presence of a proton gradient across the membrane. The sequence is that of ATP synthase epsilon chain from Streptococcus equi subsp. equi (strain 4047).